The following is a 497-amino-acid chain: SPI-2 type 3 secretion system secretin (497 aa).

An N-terminal signal peptide occupies residues 1–20 (MVVNKRLILILLFILNTAKS).

This sequence belongs to the bacterial secretin family. T3SS SctC subfamily. The core secretion machinery of the T3SS is composed of approximately 20 different proteins, including cytoplasmic components, a base, an export apparatus and a needle. This subunit is part of the base, which anchors the injectisome in the bacterial cell envelope. Forms a stable homooligomeric complex.

The protein resides in the cell outer membrane. Component of the type III secretion system (T3SS), also called injectisome, which is used to inject bacterial effector proteins into eukaryotic host cells. Forms a ring-shaped multimeric structure with an apparent central pore in the outer membrane. Required for secretion of some type III-secreted effectors including the SpvB exotoxin. In Salmonella typhimurium (strain 14028s / SGSC 2262), this protein is SPI-2 type 3 secretion system secretin.